Reading from the N-terminus, the 281-residue chain is Glycerol uptake facilitator protein (281 aa).

At methionine 1–serine 5 the chain is on the cytoplasmic side. Residues threonine 6–valine 34 traverse the membrane as a helical segment. Topologically, residues alanine 35–phenylalanine 39 are periplasmic. The helical transmembrane segment at glycine 40–alanine 60 threads the bilayer. Topologically, residues glycine 61–serine 63 are cytoplasmic. The stretch at glycine 64–leucine 67 is an intramembrane region. An NPA 1 motif is present at residues asparagine 68–alanine 70. Positions asparagine 68–phenylalanine 78 form an intramembrane region, helical. Residues alanine 79–arginine 84 are Cytoplasmic-facing. Residues lysine 85–tyrosine 108 traverse the membrane as a helical segment. Residues tyrosine 109–isoleucine 143 lie on the Periplasmic side of the membrane. Residues asparagine 144–aspartate 169 traverse the membrane as a helical segment. Residues glycine 170–proline 177 are Cytoplasmic-facing. The helical transmembrane segment at leucine 178 to methionine 194 threads the bilayer. Residues glycine 195–threonine 198 are Periplasmic-facing. An intramembrane segment occupies glycine 199 to methionine 202. The NPA 2 motif lies at asparagine 203 to alanine 205. Residues asparagine 203–leucine 216 constitute an intramembrane region (helical). Over alanine 217–proline 231 the chain is Periplasmic. A helical transmembrane segment spans residues tyrosine 232–leucine 254. The Cytoplasmic portion of the chain corresponds to isoleucine 255–leucine 281.

It belongs to the MIP/aquaporin (TC 1.A.8) family. In terms of assembly, homotetramer.

Its subcellular location is the cell inner membrane. It catalyses the reaction glycerol(in) = glycerol(out). Functionally, mediates glycerol diffusion across the cytoplasmic membrane via a pore-type mechanism. The sequence is that of Glycerol uptake facilitator protein (glpF) from Shigella flexneri.